The following is a 529-amino-acid chain: Cytochrome P450 monooxygenase oblE (529 aa).

The chain crosses the membrane as a helical span at residues 38-58 (WQYIVTLLIAIITYDQVMYIW). A heme-binding site is contributed by cysteine 477.

This sequence belongs to the cytochrome P450 family. Heme is required as a cofactor.

The protein resides in the membrane. It participates in secondary metabolite biosynthesis; terpenoid biosynthesis. In terms of biological role, cytochrome P450 monooxygenase; part of the gene cluster that mediates the biosynthesis of the sesterterpenes ophiobolins, fungal phytotoxins with potential anti-cancer activities. The first step of the pathway is performed by the sesterterpene synthase oblA that possesses both prenyl transferase and terpene cyclase activity, converting isopentenyl diphosphate and dimethylallyl diphosphate into geranylfarnesyl diphosphate (GFPP) and further converting GFPP into ophiobolin F, respectively. Other sesterterpenoids (C(25) terpenoids) are found as minor products of oblA. The cytochrome P450 monooxygenase oblB then catalyzes a four-step oxidative transformation of ophiobolin F to yield ophiobolin C. The function of the cytochrome P450 monooxygenase oblE has still to be determined. In Emericella variicolor (Aspergillus stellatus), this protein is Cytochrome P450 monooxygenase oblE.